Here is a 264-residue protein sequence, read N- to C-terminus: ECF RNA polymerase sigma factor BldN (264 aa).

A not required for transcription in vitro region spans residues 1–87 (MYPHVGVDAS…PAADSDSARM (87 aa)). Residues 64–83 (RSSSSGAAATTHRRPAADSD) form a disordered region. A sigma-70 factor domain-2 region spans residues 105-172 (LYDQYSDTVY…LVADHFKSSR (68 aa)). Positions 129–132 (DLTS) match the Polymerase core binding motif. The interval 204-255 (ALLDAVRRLNPQQQECVTLRFLQGLSVAETARVMGKNEGAIKTLQYRAVRTL) is sigma-70 factor domain-4.

Belongs to the sigma-70 factor family. ECF subfamily. Two forms of protein exist; a 35 kDa form in early growth and a 28 kDa form seen in later stages (at protein level). In liquid culture the larger form accumulates to higher level than on solid media. The shorter form results from processing just upstream of Met-87; the exact position is unknown. There are 4 possible start codons; mutation of the first prevents protein production while mutation of the other 3 (Val-44, Met-87 and Met-88) permits production of both forms. Introduction of stop codons between the first and second, or second and third possible start codons also prevents protein production, corroborating that the annotated start codon is the correct one.

Its function is as follows. Sigma factors are initiation factors that promote the attachment of RNA polymerase to specific initiation sites and are then released. Extracytoplasmic function (ECF) sigma factors are usually held in an inactive form by an anti-sigma factor until released. ECF sigma factor involved in aerial mycelium formation, required for translation from the bldMp1 promoter. Expressed as a preprotein; processing and accumulation of the mature protein starts as aerial mycelium formation and sporulation commence. Activates expression of about 17 genes, including those for rdlA and most of the chaplins (chpA to chpH); chaplin activation is indirect. The chain is ECF RNA polymerase sigma factor BldN from Streptomyces coelicolor (strain ATCC BAA-471 / A3(2) / M145).